The chain runs to 213 residues: Thiamine-phosphate synthase (213 aa).

4-amino-2-methyl-5-(diphosphooxymethyl)pyrimidine contacts are provided by residues glutamine 38–lysine 42 and asparagine 70. Residues aspartate 71 and aspartate 90 each coordinate Mg(2+). Residue serine 109 coordinates 4-amino-2-methyl-5-(diphosphooxymethyl)pyrimidine. Threonine 135–threonine 137 serves as a coordination point for 2-[(2R,5Z)-2-carboxy-4-methylthiazol-5(2H)-ylidene]ethyl phosphate. Lysine 138 is a binding site for 4-amino-2-methyl-5-(diphosphooxymethyl)pyrimidine. Residues glycine 168 and valine 188–serine 189 contribute to the 2-[(2R,5Z)-2-carboxy-4-methylthiazol-5(2H)-ylidene]ethyl phosphate site.

This sequence belongs to the thiamine-phosphate synthase family. The cofactor is Mg(2+).

It catalyses the reaction 2-[(2R,5Z)-2-carboxy-4-methylthiazol-5(2H)-ylidene]ethyl phosphate + 4-amino-2-methyl-5-(diphosphooxymethyl)pyrimidine + 2 H(+) = thiamine phosphate + CO2 + diphosphate. The enzyme catalyses 2-(2-carboxy-4-methylthiazol-5-yl)ethyl phosphate + 4-amino-2-methyl-5-(diphosphooxymethyl)pyrimidine + 2 H(+) = thiamine phosphate + CO2 + diphosphate. The catalysed reaction is 4-methyl-5-(2-phosphooxyethyl)-thiazole + 4-amino-2-methyl-5-(diphosphooxymethyl)pyrimidine + H(+) = thiamine phosphate + diphosphate. It participates in cofactor biosynthesis; thiamine diphosphate biosynthesis; thiamine phosphate from 4-amino-2-methyl-5-diphosphomethylpyrimidine and 4-methyl-5-(2-phosphoethyl)-thiazole: step 1/1. Its function is as follows. Condenses 4-methyl-5-(beta-hydroxyethyl)thiazole monophosphate (THZ-P) and 2-methyl-4-amino-5-hydroxymethyl pyrimidine pyrophosphate (HMP-PP) to form thiamine monophosphate (TMP). This chain is Thiamine-phosphate synthase, found in Pectobacterium atrosepticum (strain SCRI 1043 / ATCC BAA-672) (Erwinia carotovora subsp. atroseptica).